A 794-amino-acid chain; its full sequence is E3 ubiquitin-protein ligase wwp-1 (794 aa).

Over residues 1–16 (MARNEPSSQQPSSSGS) the composition is skewed to low complexity. 2 disordered regions span residues 1–31 (MARN…KPSK) and 155–198 (RSAG…AAPT). Residues 10–124 (QPSSSGSNGT…TRNENGEFKN (115 aa)) enclose the C2 domain. The span at 17–27 (NGTPAQQNGSA) shows a compositional bias: polar residues. Residues 161-186 (AETAASASSEASTSNGVATSSSARRP) are compositionally biased toward low complexity. 4 WW domains span residues 219 to 252 (EQLP…RPST), 253 to 286 (QPLP…RPTA), 324 to 358 (GPLP…DPRT), and 366 to 399 (QPLP…DPRT). The 335-residue stretch at 460–794 (NAVDLRRRLY…IEMTEGFGNE (335 aa)) folds into the HECT domain. Catalysis depends on Cys-762, which acts as the Glycyl thioester intermediate.

Interacts (via WW domains) with Kruppel-like factor klf-1. Interacts with ubiquitin-conjugating enzyme E2 ubc-18. Expressed in neurons localized in the head and tail of adults.

The enzyme catalyses S-ubiquitinyl-[E2 ubiquitin-conjugating enzyme]-L-cysteine + [acceptor protein]-L-lysine = [E2 ubiquitin-conjugating enzyme]-L-cysteine + N(6)-ubiquitinyl-[acceptor protein]-L-lysine.. It functions in the pathway protein modification; protein ubiquitination. Its function is as follows. E3 ubiquitin-protein ligase which accepts ubiquitin from an E2 ubiquitin-conjugating enzyme in the form of a thioester and then directly transfers the ubiquitin to targeted substrates. Ubiquitinates klf-1. Required for diet restriction-mediated lifespan extension, acting in concert with Kruppel-like factor klf-1 in the intestine to perhaps modulate genes involved in lipid metabolism. Probably acting downstream of the Insulin/IGF-1-like signaling (IIS) mediated pathway, plays a role in the immune response to infection by the Gram-negative bacterium P.aeruginosa, at least partly in response to bacterial pore-forming toxins. The chain is E3 ubiquitin-protein ligase wwp-1 from Caenorhabditis elegans.